Reading from the N-terminus, the 104-residue chain is MKLAALLGLCVALSCSSAAAFLVGSAKPVAQPVAALESAAEAGAGTLANPLGTLNPLKLLLSSLGIPVNHLIEGSQKCVAELGPQAVGAVKALKALLGALTVFG.

Positions 1 to 20 (MKLAALLGLCVALSCSSAAA) are cleaved as a signal peptide.

This sequence belongs to the secretoglobin family. UGRP subfamily. Homodimer; disulfide-linked. Highly expressed in lung and prostate. Also found in mammary gland, spleen, pancreas, testis and liver. Detected throughout the airway epithelium in lung, with highest expression in large airways. Found in lung submucosal glands where it localizes to acinar and ductile cells. Not detected in respiratory bronchioles, alveolar ducts or alveolar epithelium. In mammary gland, specifically localizes to luminal epithelial cells.

Its subcellular location is the secreted. Functionally, secreted cytokine-like protein. Inhibits cell growth in vitro. The chain is Secretoglobin family 3A member 1 (SCGB3A1) from Homo sapiens (Human).